Reading from the N-terminus, the 175-residue chain is Alkyl hydroperoxide reductase AhpD (175 aa).

Cys-131 serves as the catalytic Proton donor. Cys-131 and Cys-134 are oxidised to a cystine. The active-site Cysteine sulfenic acid (-SOH) intermediate is the Cys-134.

Belongs to the AhpD family.

The catalysed reaction is N(6)-[(R)-dihydrolipoyl]-L-lysyl-[lipoyl-carrier protein] + a hydroperoxide = N(6)-[(R)-lipoyl]-L-lysyl-[lipoyl-carrier protein] + an alcohol + H2O. Functionally, antioxidant protein with alkyl hydroperoxidase activity. Required for the reduction of the AhpC active site cysteine residues and for the regeneration of the AhpC enzyme activity. In Brucella anthropi (strain ATCC 49188 / DSM 6882 / CCUG 24695 / JCM 21032 / LMG 3331 / NBRC 15819 / NCTC 12168 / Alc 37) (Ochrobactrum anthropi), this protein is Alkyl hydroperoxide reductase AhpD.